Reading from the N-terminus, the 2292-residue chain is Protein Ycf2 (2292 aa).

Residue 1644-1651 participates in ATP binding; it reads GSIGTGRS.

It belongs to the Ycf2 family.

It is found in the plastid. Its subcellular location is the chloroplast stroma. Its function is as follows. Probable ATPase of unknown function. Its presence in a non-photosynthetic plant (Epifagus virginiana) and experiments in tobacco indicate that it has an essential function which is probably not related to photosynthesis. In Morus indica (Mulberry), this protein is Protein Ycf2.